A 709-amino-acid chain; its full sequence is Myotubularin-related protein 11 (709 aa).

A disordered region spans residues 1–39; that stretch reads MWWGGRGQSFNIAPQKEEPEMGSVQENRMPEPRSRQPSS. The region spanning 196-639 is the Myotubularin phosphatase domain; that stretch reads METAEDWETE…PQIRLWRRCY (444 aa).

Belongs to the protein-tyrosine phosphatase family. Non-receptor class myotubularin subfamily. As to expression, expressed in bone marrow, spleen and thymus.

The sequence is that of Myotubularin-related protein 11 (MTMR11) from Homo sapiens (Human).